Reading from the N-terminus, the 360-residue chain is MLMFLTHFAEHVTPFNVFRYITFRTGGAMITSALIVFLFGPTIINSLRVRQGKGQPIRADGPQTHFKKAGTPTMGGLMIMTGILASCLLWANLASVYVWVVLMVSVGFGAIGFYDDYLKVTKQSDKGFSGKARLGIEFLIAAIAAFTIMRAGQEPFSSSLTFPFVKQLVINLSWFFILFAAFVMVGAGNAVNLTDGLDGLAIVPVMVAAASFGFIAYLSGNAIFADYLQIHFVPGTGELAVVLGAVIGAGLGFLWFNAPPAAIFMGDTGSLALGGMLGTVAVATKHEIVLAIIGGLFVMEALSVIIQVGFFKMTGRRVFLMAPIHHHFEKKGWTESQVVIRFWIVAIILAMIGLSTLKLR.

10 helical membrane-spanning segments follow: residues 27-47 (GAMI…INSL), 71-91 (TPTM…LLWA), 93-113 (LASV…AIGF), 128-148 (FSGK…AFTI), 168-188 (LVIN…VGAG), 199-219 (GLAI…AYLS), 239-259 (LAVV…FNAP), 262-282 (AIFM…TVAV), 288-308 (IVLA…IIQV), and 337-357 (QVVI…LSTL).

It belongs to the glycosyltransferase 4 family. MraY subfamily. Mg(2+) serves as cofactor.

The protein resides in the cell inner membrane. The enzyme catalyses UDP-N-acetyl-alpha-D-muramoyl-L-alanyl-gamma-D-glutamyl-meso-2,6-diaminopimeloyl-D-alanyl-D-alanine + di-trans,octa-cis-undecaprenyl phosphate = di-trans,octa-cis-undecaprenyl diphospho-N-acetyl-alpha-D-muramoyl-L-alanyl-D-glutamyl-meso-2,6-diaminopimeloyl-D-alanyl-D-alanine + UMP. It functions in the pathway cell wall biogenesis; peptidoglycan biosynthesis. In terms of biological role, catalyzes the initial step of the lipid cycle reactions in the biosynthesis of the cell wall peptidoglycan: transfers peptidoglycan precursor phospho-MurNAc-pentapeptide from UDP-MurNAc-pentapeptide onto the lipid carrier undecaprenyl phosphate, yielding undecaprenyl-pyrophosphoryl-MurNAc-pentapeptide, known as lipid I. This Brucella ovis (strain ATCC 25840 / 63/290 / NCTC 10512) protein is Phospho-N-acetylmuramoyl-pentapeptide-transferase.